Reading from the N-terminus, the 102-residue chain is Large ribosomal subunit protein bL21 (102 aa).

The protein belongs to the bacterial ribosomal protein bL21 family. Part of the 50S ribosomal subunit. Contacts protein L20.

This protein binds to 23S rRNA in the presence of protein L20. This Geobacillus sp. (strain WCH70) protein is Large ribosomal subunit protein bL21.